The primary structure comprises 362 residues: Anthranilate phosphoribosyltransferase 2 (362 aa).

5-phospho-alpha-D-ribose 1-diphosphate contacts are provided by residues G103, 106–107 (GD), T111, 113–116 (NIST), 131–139 (KHGNRSASS), and S143. Anthranilate is bound at residue G103. S115 is a Mg(2+) binding site. N134 is a binding site for anthranilate. R189 is a binding site for anthranilate. 2 residues coordinate Mg(2+): D248 and E249.

This sequence belongs to the anthranilate phosphoribosyltransferase family. In terms of assembly, homodimer. It depends on Mg(2+) as a cofactor.

It catalyses the reaction N-(5-phospho-beta-D-ribosyl)anthranilate + diphosphate = 5-phospho-alpha-D-ribose 1-diphosphate + anthranilate. Its pathway is amino-acid biosynthesis; L-tryptophan biosynthesis; L-tryptophan from chorismate: step 2/5. Its function is as follows. Catalyzes the transfer of the phosphoribosyl group of 5-phosphorylribose-1-pyrophosphate (PRPP) to anthranilate to yield N-(5'-phosphoribosyl)-anthranilate (PRA). This chain is Anthranilate phosphoribosyltransferase 2, found in Nostoc sp. (strain PCC 7120 / SAG 25.82 / UTEX 2576).